Reading from the N-terminus, the 145-residue chain is Aklanonic acid methyl ester cyclase DnrD (145 aa).

Gln106 is a substrate binding site.

It belongs to the polyketide cyclase DnrD family. Homotetramer.

The catalysed reaction is methyl aklanonate = aklaviketone. Its pathway is antibiotic biosynthesis; daunorubicin biosynthesis. The protein operates within antibiotic biosynthesis; carminomycin biosynthesis. It participates in antibiotic biosynthesis; rhodomycin biosynthesis. It functions in the pathway antibiotic biosynthesis; aclacinomycin biosynthesis. Its function is as follows. Involved in the biosynthesis of aklavinone which is an important precursor common to the formation of the clinically significant anthracyclines such as carminomycin, daunorubicin (daunomycin), rhodomycin, aclacinomycin T (aklavin) and aclacinomycin A (aclarubicin). These compounds are aromatic polyketide antibiotics that exhibit high cytotoxicity and are widely applied in the chemotherapy of a variety of cancers. Catalyzes the cyclization of aklanonic acid methyl ester to yield aklaviketone presumably via an intramolecular aldol condensation mechanism, although water is not eliminated. This is Aklanonic acid methyl ester cyclase DnrD (dnrD) from Streptomyces peucetius.